Consider the following 237-residue polypeptide: Neurogenin-1 (237 aa).

The interval 35–83 (LQQAASASGPPAPARRGAPNISRASEVPGAQDDEQERRRRRGRTRVRSE) is disordered. Residues 38-53 (AASASGPPAPARRGAP) are compositionally biased toward low complexity. The bHLH domain occupies 92–144 (SRRVKANDRERNRMHNLNAALDALRSVLPSFPDDTKLTKIETLRFAYNYIWAL). The disordered stretch occupies residues 175 to 209 (GPPSPASDAESWGSGAAAASPLSDPSSPAASEDFT). Residues 180 to 207 (ASDAESWGSGAAAASPLSDPSSPAASED) are compositionally biased toward low complexity.

Efficient DNA binding requires dimerization with another bHLH protein. In terms of tissue distribution, expression restricted to the embryonic nervous system.

The protein localises to the nucleus. In terms of biological role, acts as a transcriptional regulator. Involved in the initiation of neuronal differentiation. Activates transcription by binding to the E box (5'-CANNTG-3'). Associates with chromatin to enhancer regulatory elements in genes encoding key transcriptional regulators of neurogenesis. The sequence is that of Neurogenin-1 (NEUROG1) from Homo sapiens (Human).